A 257-amino-acid polypeptide reads, in one-letter code: Imidazole glycerol phosphate synthase subunit HisF (257 aa).

Residues aspartate 12 and aspartate 131 contribute to the active site.

The protein belongs to the HisA/HisF family. As to quaternary structure, heterodimer of HisH and HisF.

It is found in the cytoplasm. The catalysed reaction is 5-[(5-phospho-1-deoxy-D-ribulos-1-ylimino)methylamino]-1-(5-phospho-beta-D-ribosyl)imidazole-4-carboxamide + L-glutamine = D-erythro-1-(imidazol-4-yl)glycerol 3-phosphate + 5-amino-1-(5-phospho-beta-D-ribosyl)imidazole-4-carboxamide + L-glutamate + H(+). The protein operates within amino-acid biosynthesis; L-histidine biosynthesis; L-histidine from 5-phospho-alpha-D-ribose 1-diphosphate: step 5/9. Functionally, IGPS catalyzes the conversion of PRFAR and glutamine to IGP, AICAR and glutamate. The HisF subunit catalyzes the cyclization activity that produces IGP and AICAR from PRFAR using the ammonia provided by the HisH subunit. The polypeptide is Imidazole glycerol phosphate synthase subunit HisF (Burkholderia multivorans (strain ATCC 17616 / 249)).